The primary structure comprises 273 residues: Oxidation resistance protein 1 (273 aa).

Methionine 1 is subject to N-acetylmethionine. Over residues 18-33 (TDSSDSTAYTTASESS) the composition is skewed to low complexity. Disordered stretches follow at residues 18–48 (TDSS…NKTT) and 177–197 (ISEK…GDKE). Residues 37–48 (KDSHNPFRNKTT) are compositionally biased toward basic and acidic residues. In terms of domain architecture, TLDc spans 74-273 (KLLTPEMCDE…IVALEVWRVG (200 aa)). Residue serine 178 is modified to Phosphoserine.

This sequence belongs to the OXR1 family.

It localises to the mitochondrion. Involved in protection from oxidative damage. The sequence is that of Oxidation resistance protein 1 (OXR1) from Saccharomyces cerevisiae (strain ATCC 204508 / S288c) (Baker's yeast).